A 417-amino-acid polypeptide reads, in one-letter code: Phosphoribosylamine--glycine ligase (417 aa).

Positions 108-307 (KRIMDEAGVP…LSTLLFAAAT (200 aa)) constitute an ATP-grasp domain. 134–188 (LDEFGAPYVVKADGLAAGKGVIVTEDRAAALAHAARYLTHGSVLVEEFLDGEEVS) lines the ATP pocket. The Mg(2+) site is built by Glu277 and Asn279.

Belongs to the GARS family. The cofactor is Mg(2+). Mn(2+) serves as cofactor.

It catalyses the reaction 5-phospho-beta-D-ribosylamine + glycine + ATP = N(1)-(5-phospho-beta-D-ribosyl)glycinamide + ADP + phosphate + H(+). The protein operates within purine metabolism; IMP biosynthesis via de novo pathway; N(1)-(5-phospho-D-ribosyl)glycinamide from 5-phospho-alpha-D-ribose 1-diphosphate: step 2/2. This chain is Phosphoribosylamine--glycine ligase, found in Leifsonia xyli subsp. xyli (strain CTCB07).